The chain runs to 737 residues: Polyribonucleotide nucleotidyltransferase (737 aa).

Mg(2+) contacts are provided by aspartate 489 and aspartate 495. Positions 556–615 (PKIDTIKIDVDKIKIVIGKGGETIDKIIAETGVKIDIDEEGNVSIYSSDQDAINRAKEII) constitute a KH domain. An S1 motif domain is found at 625–693 (DEVYRAKVVR…EKGRIDASMK (69 aa)). The segment at 691-737 (SMKALLPRPPKPEHDEKGEKSERPHRPRHHKDHKPKKEFTETPKDSE) is disordered. Basic and acidic residues predominate over residues 700–714 (PKPEHDEKGEKSERP). The span at 715-724 (HRPRHHKDHK) shows a compositional bias: basic residues. The segment covering 725–737 (PKKEFTETPKDSE) has biased composition (basic and acidic residues).

This sequence belongs to the polyribonucleotide nucleotidyltransferase family. The cofactor is Mg(2+).

The protein localises to the cytoplasm. It carries out the reaction RNA(n+1) + phosphate = RNA(n) + a ribonucleoside 5'-diphosphate. Involved in mRNA degradation. Catalyzes the phosphorolysis of single-stranded polyribonucleotides processively in the 3'- to 5'-direction. This Streptococcus pneumoniae (strain 70585) protein is Polyribonucleotide nucleotidyltransferase.